The following is a 104-amino-acid chain: Inner membrane protein YjeO (104 aa).

The Cytoplasmic portion of the chain corresponds to 1 to 5 (MSARM). Residues 6–26 (FVLCCIWFIVAFLWITITSAL) traverse the membrane as a helical segment. Residues 27–52 (DKEWMIDGRGINNVCDVLMYLEEDDT) lie on the Periplasmic side of the membrane. Residues 53 to 73 (RDVGVIMTLPLFFPFLWFALW) form a helical membrane-spanning segment. Residues 74-77 (RKKR) lie on the Cytoplasmic side of the membrane. A helical membrane pass occupies residues 78 to 98 (GWFMYATALAIFGYWLWQFFL). At 99–104 (RYQFCL) the chain is on the periplasmic side.

The protein localises to the cell inner membrane. The protein is Inner membrane protein YjeO (yjeO) of Escherichia coli (strain K12).